Here is a 416-residue protein sequence, read N- to C-terminus: Serine hydroxymethyltransferase (416 aa).

(6S)-5,6,7,8-tetrahydrofolate contacts are provided by residues leucine 118 and 122-124; that span reads GHL. Lysine 226 bears the N6-(pyridoxal phosphate)lysine mark. Residues glutamate 242 and 350–352 each bind (6S)-5,6,7,8-tetrahydrofolate; that span reads SPF.

It belongs to the SHMT family. In terms of assembly, homodimer. The cofactor is pyridoxal 5'-phosphate.

Its subcellular location is the cytoplasm. The catalysed reaction is (6R)-5,10-methylene-5,6,7,8-tetrahydrofolate + glycine + H2O = (6S)-5,6,7,8-tetrahydrofolate + L-serine. The protein operates within one-carbon metabolism; tetrahydrofolate interconversion. Its pathway is amino-acid biosynthesis; glycine biosynthesis; glycine from L-serine: step 1/1. Functionally, catalyzes the reversible interconversion of serine and glycine with tetrahydrofolate (THF) serving as the one-carbon carrier. This reaction serves as the major source of one-carbon groups required for the biosynthesis of purines, thymidylate, methionine, and other important biomolecules. Also exhibits THF-independent aldolase activity toward beta-hydroxyamino acids, producing glycine and aldehydes, via a retro-aldol mechanism. This Helicobacter hepaticus (strain ATCC 51449 / 3B1) protein is Serine hydroxymethyltransferase.